Reading from the N-terminus, the 116-residue chain is Mitochondrial import inner membrane translocase subunit PAM16 like 2 (116 aa).

A mitochondrion-targeting transit peptide spans 1–27 (MAGRLLANLIVMGSGIIGRAVFQAYRQ). The tract at residues 57–106 (EARQILGVTEKTSWEEILQKYDKLFENNAKAGSFYLQSKVHRAKECLEVV) is J-like.

This sequence belongs to the TIM16/PAM16 family. In terms of tissue distribution, expressed constitutively and ubiquitously, except in root tips, at low levels.

The protein localises to the mitochondrion inner membrane. It localises to the cytoplasm. Regulates ATP-dependent protein translocation into the mitochondrial matrix. Involved in the uptake of thaxtomin, a phytotoxin produced by Streptomyces bacteria, that causes dramatic cell swelling, reduced seedling growth, and inhibition of cellulose synthesis. Modulates polar auxin transport. Involved in importing a negative regulator of plant immunity into mitochondria, thus protecting plants from over-accumulation of reactive oxygen species (ROS) and preventing autoimmunity. Confers sensitivity to virulent pathogens such as the oomycete H.arabidopsidis Noco2 and the bacteria P.syringae pv. maculicola ES4326. This Arabidopsis thaliana (Mouse-ear cress) protein is Mitochondrial import inner membrane translocase subunit PAM16 like 2.